We begin with the raw amino-acid sequence, 134 residues long: Aspartate 1-decarboxylase (134 aa).

Ser-25 (schiff-base intermediate with substrate; via pyruvic acid) is an active-site residue. The residue at position 25 (Ser-25) is a Pyruvic acid (Ser). Thr-57 serves as a coordination point for substrate. Tyr-58 functions as the Proton donor in the catalytic mechanism. Residue 73–75 participates in substrate binding; sequence GAA.

Belongs to the PanD family. Heterooctamer of four alpha and four beta subunits. The cofactor is pyruvate. Is synthesized initially as an inactive proenzyme, which is activated by self-cleavage at a specific serine bond to produce a beta-subunit with a hydroxyl group at its C-terminus and an alpha-subunit with a pyruvoyl group at its N-terminus.

Its subcellular location is the cytoplasm. The catalysed reaction is L-aspartate + H(+) = beta-alanine + CO2. Its pathway is cofactor biosynthesis; (R)-pantothenate biosynthesis; beta-alanine from L-aspartate: step 1/1. Functionally, catalyzes the pyruvoyl-dependent decarboxylation of aspartate to produce beta-alanine. This Citrifermentans bemidjiense (strain ATCC BAA-1014 / DSM 16622 / JCM 12645 / Bem) (Geobacter bemidjiensis) protein is Aspartate 1-decarboxylase.